The sequence spans 614 residues: Probable zinc transporter protein DDB_G0269332 (614 aa).

Disordered stretches follow at residues 1 to 103 and 115 to 178; these read MSDI…LPHL and SSYN…NNEF. Residues 1–203 lie on the Cytoplasmic side of the membrane; sequence MSDINSNSYD…NLNRDSDAKK (203 aa). A compositionally biased stretch (low complexity) spans 17 to 64; that stretch reads QHQQESQYHPQQQQQQQQQQQQQQEYYNQQHQQESQYQQQSPPQQQYD. A compositionally biased stretch (basic residues) spans 80-92; sequence GHGRSHNSGHGHS. Over residues 121–176 the composition is skewed to low complexity; that stretch reads NNSGDISNSNNNNNNNNQYNYNNNNNNNNYNNNINNNQFNSSVYNNNNNNNNNNNN. Residues 204–224 traverse the membrane as a helical segment; that stretch reads LAAWISVMLVFTIYEIFYGAY. At 225–233 the chain is on the extracellular side; that stretch reads LESLGLVSD. A helical transmembrane segment spans residues 234–254; sequence GFHALFDCIGMGIALLAMLVG. Topologically, residues 255 to 270 are cytoplasmic; that stretch reads KRGISNQEYTYGYDRW. Residues 271–291 traverse the membrane as a helical segment; it reads EVLGTFSNGCFLLFVSFFLFL. Over 292–306 the chain is Extracellular; it reads ESIERLLEPPHIHNH. A helical transmembrane segment spans residues 307 to 327; the sequence is GRVMSLATISLIINIVGVLFF. Over 328 to 351 the chain is Cytoplasmic; it reads KQKSNERKQQSSIRSENLLTISHH. A helical transmembrane segment spans residues 352-372; sequence ILVDSCTSLGVILSSLVGQAF. Residues 373-377 lie on the Extracellular side of the membrane; sequence GLEIS. Residues 378–398 form a helical membrane-spanning segment; it reads DSLISIIIACIIVYNALPICI. At 399-614 the chain is on the cytoplasmic side; it reads KTSAILLQTT…NSSHSHAHNH (216 aa). The disordered stretch occupies residues 483–614; it reads EGKHNSHSHG…NSSHSHAHNH (132 aa). Composition is skewed to basic residues over residues 487-499 and 507-523; these read NSHS…HHPH and SHNH…HGHS. Over residues 525–535 the composition is skewed to basic and acidic residues; it reads GGNDDHEHGEN. Over residues 548–567 the composition is skewed to polar residues; it reads VQPTSPFSSHYTDIHSNNTP. Positions 575–585 are enriched in acidic residues; the sequence is QDDEDDEDDYD. Residues 586-599 are compositionally biased toward basic and acidic residues; it reads HDEHHHDHDHDEHH. The span at 600–614 shows a compositional bias: basic residues; it reads HGHSHNSSHSHAHNH.

The protein belongs to the cation diffusion facilitator (CDF) transporter (TC 2.A.4) family. SLC30A subfamily.

The protein resides in the membrane. Functionally, may be involved in zinc transport from the cytoplasm to either intracellular organelles or extracellular spaces. In Dictyostelium discoideum (Social amoeba), this protein is Probable zinc transporter protein DDB_G0269332.